The following is a 459-amino-acid chain: Ribulose bisphosphate carboxylase large chain (459 aa).

Lys4 is subject to N6,N6,N6-trimethyllysine. The substrate site is built by Asn113 and Thr163. Lys165 serves as the catalytic Proton acceptor. Lys167 serves as a coordination point for substrate. Mg(2+)-binding residues include Lys191, Asp193, and Glu194. An N6-carboxylysine modification is found at Lys191. Residue His284 is the Proton acceptor of the active site. Arg285, His317, and Ser369 together coordinate substrate.

Belongs to the RuBisCO large chain family. Type I subfamily. As to quaternary structure, heterohexadecamer of 8 large chains and 8 small chains; disulfide-linked. The disulfide link is formed within the large subunit homodimers. Requires Mg(2+) as cofactor. Post-translationally, the disulfide bond which can form in the large chain dimeric partners within the hexadecamer appears to be associated with oxidative stress and protein turnover.

The protein resides in the plastid. The protein localises to the chloroplast. It catalyses the reaction 2 (2R)-3-phosphoglycerate + 2 H(+) = D-ribulose 1,5-bisphosphate + CO2 + H2O. The catalysed reaction is D-ribulose 1,5-bisphosphate + O2 = 2-phosphoglycolate + (2R)-3-phosphoglycerate + 2 H(+). In terms of biological role, ruBisCO catalyzes two reactions: the carboxylation of D-ribulose 1,5-bisphosphate, the primary event in carbon dioxide fixation, as well as the oxidative fragmentation of the pentose substrate in the photorespiration process. Both reactions occur simultaneously and in competition at the same active site. The chain is Ribulose bisphosphate carboxylase large chain from Heuchera micrantha (Alum root).